The primary structure comprises 138 residues: Ribosome-binding factor A (138 aa).

This sequence belongs to the RbfA family. As to quaternary structure, monomer. Binds 30S ribosomal subunits, but not 50S ribosomal subunits or 70S ribosomes.

It is found in the cytoplasm. One of several proteins that assist in the late maturation steps of the functional core of the 30S ribosomal subunit. Associates with free 30S ribosomal subunits (but not with 30S subunits that are part of 70S ribosomes or polysomes). Required for efficient processing of 16S rRNA. May interact with the 5'-terminal helix region of 16S rRNA. The polypeptide is Ribosome-binding factor A (Bradyrhizobium sp. (strain BTAi1 / ATCC BAA-1182)).